The following is a 375-amino-acid chain: Dehydrodolichyl diphosphate synthase complex subunit NUS1 (375 aa).

Residues 1–28 are compositionally biased toward basic and acidic residues; the sequence is MPTMIKKDDKAMEPPNEKPHRKIERDDV. The tract at residues 1–48 is disordered; sequence MPTMIKKDDKAMEPPNEKPHRKIERDDVPESSNHIPPPESGVLKGGKV. A helical transmembrane segment spans residues 97 to 119; sequence YLFYKFLLVLLYICFGLFRYGQY.

This sequence belongs to the UPP synthase family. Forms an active dehydrodolichyl diphosphate synthase complex with either SRT1 or RER2. Mg(2+) is required as a cofactor.

It localises to the endoplasmic reticulum membrane. The protein localises to the lipid droplet. Its subcellular location is the nucleus membrane. It catalyses the reaction n isopentenyl diphosphate + (2E,6E)-farnesyl diphosphate = a di-trans,poly-cis-polyprenyl diphosphate + n diphosphate. It participates in protein modification; protein glycosylation. Its function is as follows. With SRT1 or RER2, forms the dehydrodolichyl diphosphate synthase (DDS) complex, an essential component of the dolichol monophosphate (Dol-P) biosynthetic machinery. Adds multiple copies of isopentenyl pyrophosphate (IPP) to farnesyl pyrophosphate (FPP) to produce dehydrodolichyl diphosphate (Dedol-PP), a precursor of dolichol which is utilized as a sugar carrier in protein glycosylation in the endoplasmic reticulum (ER). The polypeptide is Dehydrodolichyl diphosphate synthase complex subunit NUS1 (NUS1) (Saccharomyces cerevisiae (strain ATCC 204508 / S288c) (Baker's yeast)).